Here is a 95-residue protein sequence, read N- to C-terminus: Small ribosomal subunit protein bS6 (95 aa).

This sequence belongs to the bacterial ribosomal protein bS6 family.

Functionally, binds together with bS18 to 16S ribosomal RNA. This Streptococcus agalactiae serotype Ia (strain ATCC 27591 / A909 / CDC SS700) protein is Small ribosomal subunit protein bS6.